Reading from the N-terminus, the 308-residue chain is Glutaminase (308 aa).

7 residues coordinate substrate: Ser66, Asn117, Glu161, Asn168, Tyr192, Tyr244, and Val262.

Belongs to the glutaminase family. Homotetramer.

It carries out the reaction L-glutamine + H2O = L-glutamate + NH4(+). The protein is Glutaminase of Klebsiella pneumoniae subsp. pneumoniae (strain ATCC 700721 / MGH 78578).